Reading from the N-terminus, the 440-residue chain is Tryptophan synthase beta chain (440 aa).

At Lys110 the chain carries N6-(pyridoxal phosphate)lysine.

This sequence belongs to the TrpB family. In terms of assembly, tetramer of two alpha and two beta chains. Pyridoxal 5'-phosphate serves as cofactor.

It catalyses the reaction (1S,2R)-1-C-(indol-3-yl)glycerol 3-phosphate + L-serine = D-glyceraldehyde 3-phosphate + L-tryptophan + H2O. Its pathway is amino-acid biosynthesis; L-tryptophan biosynthesis; L-tryptophan from chorismate: step 5/5. Functionally, the beta subunit is responsible for the synthesis of L-tryptophan from indole and L-serine. This chain is Tryptophan synthase beta chain, found in Thermococcus gammatolerans (strain DSM 15229 / JCM 11827 / EJ3).